The primary structure comprises 197 residues: Signal peptidase complex catalytic subunit SEC11 (197 aa).

The Cytoplasmic segment spans residues 1 to 14 (MLSSLAPYMANPRQ). A helical; Signal-anchor for type II membrane protein transmembrane segment spans residues 15 to 33 (TLTQVLNFALVLSTAFMLW). Topologically, residues 34–197 (KGLSVITNST…MGLMVVLQRE (164 aa)) are lumenal. Asn41 carries an N-linked (GlcNAc...) asparagine glycan. Residues Ser53 and His92 each act as charge relay system in the active site. The segment covering 102–115 (PGREDKKNVKKGGE) has biased composition (basic and acidic residues). The tract at residues 102–134 (PGREDKKNVKKGGEEGEETSSTPSQKLLTKGDN) is disordered. The active-site Charge relay system is Asp139. Residues 183 to 194 (VLLGFMGLMVVL) form a C-terminal short (CTS) helix region.

It belongs to the peptidase S26B family. As to quaternary structure, component of the signal peptidase complex (SPC) composed of a catalytic subunit SEC11 and three accessory subunits SPC1, SPC2 and SPC3. The complex induces a local thinning of the ER membrane which is used to measure the length of the signal peptide (SP) h-region of protein substrates. This ensures the selectivity of the complex towards h-regions shorter than 18-20 amino acids. SPC associates with the translocon complex.

The protein resides in the endoplasmic reticulum membrane. It carries out the reaction Cleavage of hydrophobic, N-terminal signal or leader sequences from secreted and periplasmic proteins.. In terms of biological role, catalytic component of the signal peptidase complex (SPC) which catalyzes the cleavage of N-terminal signal sequences from nascent proteins as they are translocated into the lumen of the endoplasmic reticulum. Specifically cleaves N-terminal signal peptides that contain a hydrophobic alpha-helix (h-region) shorter than 18-20 amino acids. The polypeptide is Signal peptidase complex catalytic subunit SEC11 (SEC11) (Paracoccidioides brasiliensis (strain Pb18)).